Reading from the N-terminus, the 472-residue chain is Sulfate adenylyltransferase subunit 1 (472 aa).

One can recognise a tr-type G domain in the interval 24–240 (KSLLRFLTCG…ENAEVGTRDL (217 aa)). Residues 33–40 (GSVDDGKS) are G1. 33–40 (GSVDDGKS) is a binding site for GTP. Residues 91–95 (GITID) form a G2 region. A G3 region spans residues 112-115 (DTPG). GTP contacts are provided by residues 112-116 (DTPGH) and 167-170 (NKMD). The interval 167 to 170 (NKMD) is G4. The G5 stretch occupies residues 204-206 (SAL).

It belongs to the TRAFAC class translation factor GTPase superfamily. Classic translation factor GTPase family. CysN/NodQ subfamily. Heterodimer composed of CysD, the smaller subunit, and CysN.

The enzyme catalyses sulfate + ATP + H(+) = adenosine 5'-phosphosulfate + diphosphate. It participates in sulfur metabolism; hydrogen sulfide biosynthesis; sulfite from sulfate: step 1/3. With CysD forms the ATP sulfurylase (ATPS) that catalyzes the adenylation of sulfate producing adenosine 5'-phosphosulfate (APS) and diphosphate, the first enzymatic step in sulfur assimilation pathway. APS synthesis involves the formation of a high-energy phosphoric-sulfuric acid anhydride bond driven by GTP hydrolysis by CysN coupled to ATP hydrolysis by CysD. The protein is Sulfate adenylyltransferase subunit 1 of Tolumonas auensis (strain DSM 9187 / NBRC 110442 / TA 4).